Consider the following 722-residue polypeptide: Polyribonucleotide nucleotidyltransferase (722 aa).

Mg(2+) is bound by residues D505 and D511. Residues 572 to 631 form the KH domain; sequence PSITTIKIHPDKIRDVIGKGGATIRGICDETGASIDLDDDGNVKIYADNAAAAQAAVNRV. The S1 motif domain occupies 641-709; sequence GAIYKGRVER…NRGRVKLSMK (69 aa).

It belongs to the polyribonucleotide nucleotidyltransferase family. In terms of assembly, component of the RNA degradosome, which is a multiprotein complex involved in RNA processing and mRNA degradation. It depends on Mg(2+) as a cofactor.

It is found in the cytoplasm. The enzyme catalyses RNA(n+1) + phosphate = RNA(n) + a ribonucleoside 5'-diphosphate. Functionally, involved in mRNA degradation. Catalyzes the phosphorolysis of single-stranded polyribonucleotides processively in the 3'- to 5'-direction. In Marinobacter nauticus (strain ATCC 700491 / DSM 11845 / VT8) (Marinobacter aquaeolei), this protein is Polyribonucleotide nucleotidyltransferase.